A 180-amino-acid chain; its full sequence is MTTKFEATTICAVRQNGHNAMAGDGQVTMGEKVVMKGTAHKVRRIYNDQVVVGFAGSVADAFNLEDRFEKKLNEFSGNLQRAAVELAQEWRSDQALQKLEALLIVMNKDDMLLVSGSGEVITPDNDVLAIGSGGNFALAAARAMQLHAKDMSAKEVAEAAIHIAGDIDIFTNHNVISETL.

Residue threonine 8 is part of the active site. Na(+) contacts are provided by glycine 165, aspartate 168, and threonine 171.

This sequence belongs to the peptidase T1B family. HslV subfamily. In terms of assembly, a double ring-shaped homohexamer of HslV is capped on each side by a ring-shaped HslU homohexamer. The assembly of the HslU/HslV complex is dependent on binding of ATP.

Its subcellular location is the cytoplasm. The enzyme catalyses ATP-dependent cleavage of peptide bonds with broad specificity.. With respect to regulation, allosterically activated by HslU binding. Protease subunit of a proteasome-like degradation complex believed to be a general protein degrading machinery. This Lactiplantibacillus plantarum (strain ATCC BAA-793 / NCIMB 8826 / WCFS1) (Lactobacillus plantarum) protein is ATP-dependent protease subunit HslV.